Here is a 214-residue protein sequence, read N- to C-terminus: Acyl-homoserine-lactone synthase (214 aa).

It belongs to the autoinducer synthase family.

The catalysed reaction is a fatty acyl-[ACP] + S-adenosyl-L-methionine = an N-acyl-L-homoserine lactone + S-methyl-5'-thioadenosine + holo-[ACP] + H(+). In terms of biological role, required for the synthesis of autoinducer molecules such as OHHL (N-(3-oxohexanoyl)-L-homoserine lactone), and HHL (N-hexanoyl-L-homoserine lactone). The sequence is that of Acyl-homoserine-lactone synthase (yenI) from Yersinia enterocolitica.